Here is a 107-residue protein sequence, read N- to C-terminus: uncharacterized protein (107 aa).

This is an uncharacterized protein from Yersinia pseudotuberculosis serotype I (strain IP32953).